Here is a 181-residue protein sequence, read N- to C-terminus: Cyclic AMP-dependent transcription factor ATF-3 (181 aa).

The tract at residues 73–97 is disordered; sequence EMSVTKSEAAPEEDERKRRRRERNK. Residue lysine 78 forms a Glycyl lysine isopeptide (Lys-Gly) (interchain with G-Cter in SUMO2) linkage. A bZIP domain is found at 86-149; sequence DERKRRRRER…QHLIYMLNLH (64 aa). Residues 88-110 form a basic motif region; the sequence is RKRRRRERNKIAAAKCRNKKKEK. The tract at residues 114-142 is leucine-zipper; that stretch reads LQKESEKLESVNAELKAQIEELKNEKQHL. The residue at position 162 (threonine 162) is a Phosphothreonine. A Glycyl lysine isopeptide (Lys-Gly) (interchain with G-Cter in SUMO2) cross-link involves residue lysine 175.

This sequence belongs to the bZIP family. ATF subfamily. In terms of assembly, binds DNA as a homodimer or a heterodimer. Interacts with KAT5; promoting KAT5 autoacetylation and KAT5 deubiquitination by USP7.

Its subcellular location is the nucleus. In terms of biological role, this protein binds the cAMP response element (CRE) (consensus: 5'-GTGACGT[AC][AG]-3'), a sequence present in many viral and cellular promoters. Represses transcription from promoters with ATF sites. It may repress transcription by stabilizing the binding of inhibitory cofactors at the promoter. The protein is Cyclic AMP-dependent transcription factor ATF-3 of Mus musculus (Mouse).